The following is a 308-amino-acid chain: Ribonuclease Z (308 aa).

Zn(2+) is bound by residues H60, H62, D64, H65, H140, D209, and H269. D64 serves as the catalytic Proton acceptor.

It belongs to the RNase Z family. In terms of assembly, homodimer. Zn(2+) is required as a cofactor.

The enzyme catalyses Endonucleolytic cleavage of RNA, removing extra 3' nucleotides from tRNA precursor, generating 3' termini of tRNAs. A 3'-hydroxy group is left at the tRNA terminus and a 5'-phosphoryl group is left at the trailer molecule.. Functionally, zinc phosphodiesterase, which displays some tRNA 3'-processing endonuclease activity. Probably involved in tRNA maturation, by removing a 3'-trailer from precursor tRNA. This chain is Ribonuclease Z, found in Methanococcus maripaludis (strain C6 / ATCC BAA-1332).